Consider the following 72-residue polypeptide: Large ribosomal subunit protein uL29 (72 aa).

The protein belongs to the universal ribosomal protein uL29 family.

The chain is Large ribosomal subunit protein uL29 from Chlamydia caviae (strain ATCC VR-813 / DSM 19441 / 03DC25 / GPIC) (Chlamydophila caviae).